The sequence spans 233 residues: uncharacterized protein (233 aa).

Belongs to the RHS family.

This is an uncharacterized protein from Escherichia coli (strain K12).